Reading from the N-terminus, the 794-residue chain is Transcription factor TOG1 (794 aa).

C18, C21, C28, C34, C37, and C44 together coordinate Zn(2+). Residues C18–C44 constitute a DNA-binding region (zn(2)-C6 fungal-type).

The protein localises to the nucleus. Transcriptional activator required for growth on non-fermentable carbon sources and that regulates genes involved in fatty acid utilization. Acts as a direct activator that binds the promoters of oleate utilizing genes, encoded key enzymes in beta-oxidation and NADPH regeneration (POX1, FOX2,POT1 and IDP2), the glyoxylate shunt (MLS1 and ICL1), and gluconeogenesis (PCK1 and FBP1). Also regulates the abundance of peroxisomes that are vital for fatty acid oxidation. The chain is Transcription factor TOG1 from Saccharomyces cerevisiae (strain ATCC 204508 / S288c) (Baker's yeast).